The sequence spans 572 residues: uncharacterized protein (572 aa).

A disordered region spans residues 553–572; the sequence is PSPAPKPVTVRKKKGNSPIS. Over residues 561 to 572 the composition is skewed to basic residues; the sequence is TVRKKKGNSPIS.

This is an uncharacterized protein from Homo sapiens (Human).